Here is a 457-residue protein sequence, read N- to C-terminus: Heme sensor protein HssS (457 aa).

Transmembrane regions (helical) follow at residues 9–29 and 164–184; these read IAIYSITVILFSALISFVLTN and TFLAVLLMLLLFISISLVIAS. The HAMP domain maps to 186-238; sequence YSIIRPVKKLKLATERLIDGDFETPIKQTRKDEIGTLQYHFNKMRESLGQVDQ. The Histidine kinase domain occupies 246–456; the sequence is NVSHEIKTPL…TFTITLPNNS (211 aa). Phosphohistidine; by autocatalysis is present on His249.

Autophosphorylated.

The protein resides in the cell membrane. The enzyme catalyses ATP + protein L-histidine = ADP + protein N-phospho-L-histidine.. Its function is as follows. Member of the two-component regulatory system HssS/HssR involved in intracellular heme homeostasis and tempering of staphylococcal virulence. HssS functions as a heme sensor histidine kinase which is autophosphorylated at a histidine residue and transfers its phosphate group to an aspartate residue of HssR. HssR/HssS activates the expression of hrtAB, an efflux pump, in response to extracellular heme, hemin, hemoglobin or blood. This is Heme sensor protein HssS (hssS) from Staphylococcus aureus (strain MSSA476).